A 217-amino-acid polypeptide reads, in one-letter code: Large ribosomal subunit protein uL4 (217 aa).

The segment at 46–102 (KRQGTHSAKTRAEVSGGGRKPFRQKGTGRARQGSIRAPHFTGGGISHGPKPRDYSQR) is disordered.

It belongs to the universal ribosomal protein uL4 family. As to quaternary structure, part of the 50S ribosomal subunit.

One of the primary rRNA binding proteins, this protein initially binds near the 5'-end of the 23S rRNA. It is important during the early stages of 50S assembly. It makes multiple contacts with different domains of the 23S rRNA in the assembled 50S subunit and ribosome. Functionally, forms part of the polypeptide exit tunnel. This is Large ribosomal subunit protein uL4 from Corynebacterium diphtheriae (strain ATCC 700971 / NCTC 13129 / Biotype gravis).